Consider the following 185-residue polypeptide: Ribosome-recycling factor (185 aa).

This sequence belongs to the RRF family.

The protein localises to the cytoplasm. Functionally, responsible for the release of ribosomes from messenger RNA at the termination of protein biosynthesis. May increase the efficiency of translation by recycling ribosomes from one round of translation to another. This chain is Ribosome-recycling factor, found in Geotalea daltonii (strain DSM 22248 / JCM 15807 / FRC-32) (Geobacter daltonii).